A 221-amino-acid chain; its full sequence is Carbonic anhydrase (221 aa).

Zn(2+) is bound by residues C38, D40, H99, and C102.

It belongs to the beta-class carbonic anhydrase family. It depends on Zn(2+) as a cofactor.

It catalyses the reaction hydrogencarbonate + H(+) = CO2 + H2O. The polypeptide is Carbonic anhydrase (cynT) (Helicobacter pylori (strain ATCC 700392 / 26695) (Campylobacter pylori)).